A 653-amino-acid polypeptide reads, in one-letter code: tRNA uridine 5-carboxymethylaminomethyl modification enzyme MnmG (653 aa).

FAD contacts are provided by residues 18–23 (GAGHAG), valine 130, and threonine 195. 287 to 301 (GPRYCPSIEDKVVRF) lines the NAD(+) pocket. Residue glutamine 384 coordinates FAD. The segment at 624-653 (SQTKSSASVDKRASSDNESSRPTSSASDSL) is disordered. Over residues 632 to 642 (VDKRASSDNES) the composition is skewed to basic and acidic residues. Positions 643–653 (SRPTSSASDSL) are enriched in polar residues.

Belongs to the MnmG family. In terms of assembly, homodimer. Heterotetramer of two MnmE and two MnmG subunits. It depends on FAD as a cofactor.

It is found in the cytoplasm. Its function is as follows. NAD-binding protein involved in the addition of a carboxymethylaminomethyl (cmnm) group at the wobble position (U34) of certain tRNAs, forming tRNA-cmnm(5)s(2)U34. The chain is tRNA uridine 5-carboxymethylaminomethyl modification enzyme MnmG from Rhodopirellula baltica (strain DSM 10527 / NCIMB 13988 / SH1).